We begin with the raw amino-acid sequence, 264 residues long: Thymidylate synthase (264 aa).

Arginine 21 is a binding site for dUMP. Histidine 51 serves as a coordination point for (6R)-5,10-methylene-5,6,7,8-tetrahydrofolate. 126 to 127 (RR) contacts dUMP. Cysteine 146 acts as the Nucleophile in catalysis. Residues 166 to 169 (RSAD), asparagine 177, and 207 to 209 (HIY) each bind dUMP. (6R)-5,10-methylene-5,6,7,8-tetrahydrofolate is bound at residue aspartate 169. Alanine 263 provides a ligand contact to (6R)-5,10-methylene-5,6,7,8-tetrahydrofolate.

The protein belongs to the thymidylate synthase family. Bacterial-type ThyA subfamily. Homodimer.

It localises to the cytoplasm. The enzyme catalyses dUMP + (6R)-5,10-methylene-5,6,7,8-tetrahydrofolate = 7,8-dihydrofolate + dTMP. The protein operates within pyrimidine metabolism; dTTP biosynthesis. In terms of biological role, catalyzes the reductive methylation of 2'-deoxyuridine-5'-monophosphate (dUMP) to 2'-deoxythymidine-5'-monophosphate (dTMP) while utilizing 5,10-methylenetetrahydrofolate (mTHF) as the methyl donor and reductant in the reaction, yielding dihydrofolate (DHF) as a by-product. This enzymatic reaction provides an intracellular de novo source of dTMP, an essential precursor for DNA biosynthesis. This is Thymidylate synthase from Ruthia magnifica subsp. Calyptogena magnifica.